A 463-amino-acid polypeptide reads, in one-letter code: MIQLSNPRINKTFEALFALEDIREVFRQSLPTGLSSAEEQALKGKLAEIRKYLDEIEADGVGNGARQKYTGKIGSLDVRTREEEYINIHPIQAAGRLTPEARKAIIAYGDGYSTCDYCRKPFRLDKITKPGIQDFHGDLARWLNMDQARVVPGARRGFQAVASALVEKGDSVIVSALAHYTEFLAVEQAGGVVKEVPKNEQNLITADATAQKIEDVRRTTGKLPVLIMIDHFDYMFANEHDVYGIAKVAKQYGIPFLYNGAYTVGIAPVDGKKIGADFVVGSGHKSMASVAPSGVLATTDEFAAKVFRTTQMVGDVTNRKFGIKEVENMGCTLMGGTLLSMIASFPAVVKRSQPQNWEDEVRKSNYFLEQFRRVQGSNVLSEWPRKHTLTKVDTTGSYNKVAETHKRRGYFFNDELTAKGIIGEFAGATKTWKLNTYGLSWEKTKYLSEAFLDIARKYDLPIN.

Pyridoxal 5'-phosphate is bound by residues alanine 154 to arginine 155, asparagine 259, and serine 282 to histidine 284. Position 285 is an N6-(pyridoxal phosphate)lysine (lysine 285).

It belongs to the SepCysS family. As to quaternary structure, homodimer. Interacts with SepRS. It depends on pyridoxal 5'-phosphate as a cofactor.

It carries out the reaction O-phospho-L-seryl-tRNA(Cys) + hydrogen sulfide + H(+) = L-cysteinyl-tRNA(Cys) + phosphate. Functionally, converts O-phospho-L-seryl-tRNA(Cys) (Sep-tRNA(Cys)) to L-cysteinyl-tRNA(Cys) (Cys-tRNA(Cys)). The protein is O-phospho-L-seryl-tRNA:Cys-tRNA synthase 2 of Methanocella arvoryzae (strain DSM 22066 / NBRC 105507 / MRE50).